The following is a 263-amino-acid chain: Tryptophan synthase alpha chain (263 aa).

Active-site proton acceptor residues include Glu49 and Asp60.

Belongs to the TrpA family. As to quaternary structure, tetramer of two alpha and two beta chains.

The catalysed reaction is (1S,2R)-1-C-(indol-3-yl)glycerol 3-phosphate + L-serine = D-glyceraldehyde 3-phosphate + L-tryptophan + H2O. The protein operates within amino-acid biosynthesis; L-tryptophan biosynthesis; L-tryptophan from chorismate: step 5/5. In terms of biological role, the alpha subunit is responsible for the aldol cleavage of indoleglycerol phosphate to indole and glyceraldehyde 3-phosphate. This is Tryptophan synthase alpha chain from Roseobacter denitrificans (strain ATCC 33942 / OCh 114) (Erythrobacter sp. (strain OCh 114)).